Reading from the N-terminus, the 751-residue chain is Translation initiation factor IF-2, chloroplastic (751 aa).

The interval K86 to N156 is disordered. Over residues R93–N106 the composition is skewed to basic and acidic residues. The segment covering V129–S143 has biased composition (low complexity). The region spanning K250–K423 is the tr-type G domain. Residues G259–T266 are G1. Residue G259–T266 participates in GTP binding. The G2 stretch occupies residues G284–K288. Positions D309–G312 are G3. GTP is bound by residues D309–H313 and N363–D366. Positions N363 to D366 are G4. Residues S399 to M401 are G5.

It belongs to the TRAFAC class translation factor GTPase superfamily. Classic translation factor GTPase family. IF-2 subfamily.

The protein localises to the plastid. Its subcellular location is the chloroplast. Its function is as follows. One of the essential components for the initiation of protein synthesis. Protects formylmethionyl-tRNA from spontaneous hydrolysis and promotes its binding to the 30S ribosomal subunits. Also involved in the hydrolysis of GTP during the formation of the 70S ribosomal complex. This is Translation initiation factor IF-2, chloroplastic (infB) from Rhodomonas salina (Cryptomonas salina).